A 257-amino-acid polypeptide reads, in one-letter code: Receptor expression-enhancing protein 4 (257 aa).

The next 2 helical transmembrane spans lie at 1–21 and 42–62; these read MVSW…YPAY and WIVF…ISWF. Residues S152 and S194 each carry the phosphoserine modification. A disordered region spans residues 159–257; the sequence is IPDTSAPTYQ…KKTIPSDLDS (99 aa). A Phosphothreonine modification is found at T196. Position 202 is a phosphoserine (S202). T250 carries the post-translational modification Phosphothreonine. S253 carries the phosphoserine modification.

The protein belongs to the DP1 family.

It localises to the endoplasmic reticulum membrane. Microtubule-binding protein required to ensure proper cell division and nuclear envelope reassembly by sequestering the endoplasmic reticulum away from chromosomes during mitosis. Probably acts by clearing the endoplasmic reticulum membrane from metaphase chromosomes. This chain is Receptor expression-enhancing protein 4 (Reep4), found in Rattus norvegicus (Rat).